Consider the following 36-residue polypeptide: Trypsin inhibitor 2 (36 aa).

Cystine bridges form between Cys-3-Cys-20, Cys-10-Cys-24, and Cys-19-Cys-35.

Trypsin inhibitor. This is Trypsin inhibitor 2 from Spinacia oleracea (Spinach).